A 487-amino-acid chain; its full sequence is Putative B3 domain-containing protein At1g78640 (487 aa).

DNA-binding regions (TF-B3) lie at residues 171 to 269 and 379 to 474; these read RLLL…QQGT and RLTL…LFRV.

It is found in the nucleus. The chain is Putative B3 domain-containing protein At1g78640 from Arabidopsis thaliana (Mouse-ear cress).